A 345-amino-acid chain; its full sequence is Phosphoribosylformylglycinamidine cyclo-ligase (345 aa).

It belongs to the AIR synthase family.

The protein resides in the cytoplasm. It carries out the reaction 2-formamido-N(1)-(5-O-phospho-beta-D-ribosyl)acetamidine + ATP = 5-amino-1-(5-phospho-beta-D-ribosyl)imidazole + ADP + phosphate + H(+). It participates in purine metabolism; IMP biosynthesis via de novo pathway; 5-amino-1-(5-phospho-D-ribosyl)imidazole from N(2)-formyl-N(1)-(5-phospho-D-ribosyl)glycinamide: step 2/2. The protein is Phosphoribosylformylglycinamidine cyclo-ligase of Chromobacterium violaceum (strain ATCC 12472 / DSM 30191 / JCM 1249 / CCUG 213 / NBRC 12614 / NCIMB 9131 / NCTC 9757 / MK).